Consider the following 393-residue polypeptide: Geranylgeranyl pyrophosphate synthase 2 (393 aa).

Positions 109, 112, and 141 each coordinate isopentenyl diphosphate. 2 residues coordinate Mg(2+): Asp148 and Asp152. A dimethylallyl diphosphate-binding site is contributed by Arg157. Arg158 serves as a coordination point for isopentenyl diphosphate. The dimethylallyl diphosphate site is built by Lys235, Thr236, and Gln275. Residue Asp278 participates in Mg(2+) binding. Dimethylallyl diphosphate-binding residues include Asn282, Lys292, and Lys302.

Belongs to the FPP/GGPP synthase family. Requires Mg(2+) as cofactor.

It catalyses the reaction isopentenyl diphosphate + dimethylallyl diphosphate = (2E)-geranyl diphosphate + diphosphate. The enzyme catalyses isopentenyl diphosphate + (2E)-geranyl diphosphate = (2E,6E)-farnesyl diphosphate + diphosphate. It carries out the reaction isopentenyl diphosphate + (2E,6E)-farnesyl diphosphate = (2E,6E,10E)-geranylgeranyl diphosphate + diphosphate. The protein operates within plant hormone biosynthesis; gibberellin biosynthesis. Functionally, geranylgeranyl pyrophosphate synthase; part of the gene cluster that mediates the biosynthesis of gibberellins (GAs), diterpenoids that may provide a selective advantage during infection of the preferred host plant, rice. Gibberellins (GAs) are diterpenoids and are synthesized via the mevalonate pathway. Biosynthesis of the major metabolite GA3 (gibberellic acid) from geranylgeranyl diphosphate (GGPP) requires 13 steps. The GGPP produced by the geranylgeranyl diphosphate synthase GGS2 is converted to ent-kaurene via ent-copalyldiphosphate in a two-step cyclization reaction performed by the bifunctional ent-copalyl diphosphate synthase/ent-kaurene synthase enzyme (CPS/KS). Ent-Kaurene is metabolized to GAs by a series of oxidation reactions catalyzed by cytochrome P450 monooxygenases. Cytochrome P450 monooxygenase P450-4 is an ent-kaurene oxidase that catalyzes the three oxidation steps between ent-kaurene and ent-kaurenoic acid. The highly multifunctional cytochrome P450 monooxygenase P450-1 then catalyzes four steps involving oxidation at two carbon atoms, in the main pathway from ent-kaurenoic acid to GA14 via GA12-aldehyde as well as producing kaurenolides and fujenoic acids as by-products. The cytochrome P450 monooxygenase P450-2 then converts GA14 to GA4 by removal of C-20. GA4 is further converted to GA7 by the GA4 desaturase DES via 1,2-desaturation before cytochrome P450 monooxygenase P450-3, a 13-hydroxylase, hydroxylates GA7 to GA3, the final product of the GA-biosynthetic pathway. In Gibberella fujikuroi (strain CBS 195.34 / IMI 58289 / NRRL A-6831) (Bakanae and foot rot disease fungus), this protein is Geranylgeranyl pyrophosphate synthase 2.